We begin with the raw amino-acid sequence, 590 residues long: Aspartate--tRNA(Asp/Asn) ligase (590 aa).

Residue Glu176 participates in L-aspartate binding. Positions 200–203 (QLFK) are aspartate. Positions 222 and 451 each coordinate L-aspartate. Residue 222–224 (RDE) participates in ATP binding. Residue Glu485 participates in ATP binding. Position 492 (Arg492) interacts with L-aspartate. Position 537–540 (537–540 (GIDR)) interacts with ATP.

This sequence belongs to the class-II aminoacyl-tRNA synthetase family. Type 1 subfamily. As to quaternary structure, homodimer.

The protein resides in the cytoplasm. It catalyses the reaction tRNA(Asx) + L-aspartate + ATP = L-aspartyl-tRNA(Asx) + AMP + diphosphate. Its function is as follows. Aspartyl-tRNA synthetase with relaxed tRNA specificity since it is able to aspartylate not only its cognate tRNA(Asp) but also tRNA(Asn). Reaction proceeds in two steps: L-aspartate is first activated by ATP to form Asp-AMP and then transferred to the acceptor end of tRNA(Asp/Asn). The polypeptide is Aspartate--tRNA(Asp/Asn) ligase (Ehrlichia canis (strain Jake)).